A 100-amino-acid chain; its full sequence is Large ribosomal subunit protein uL23 (100 aa).

Belongs to the universal ribosomal protein uL23 family. Part of the 50S ribosomal subunit. Contacts protein L29, and trigger factor when it is bound to the ribosome.

Functionally, one of the early assembly proteins it binds 23S rRNA. One of the proteins that surrounds the polypeptide exit tunnel on the outside of the ribosome. Forms the main docking site for trigger factor binding to the ribosome. The sequence is that of Large ribosomal subunit protein uL23 from Shewanella pealeana (strain ATCC 700345 / ANG-SQ1).